Here is a 313-residue protein sequence, read N- to C-terminus: tRNA dimethylallyltransferase (313 aa).

10 to 17 (GPTAVGKS) lines the ATP pocket. 12–17 (TAVGKS) contacts substrate. The tract at residues 35 to 38 (DSTQ) is interaction with substrate tRNA.

The protein belongs to the IPP transferase family. As to quaternary structure, monomer. Mg(2+) is required as a cofactor.

It catalyses the reaction adenosine(37) in tRNA + dimethylallyl diphosphate = N(6)-dimethylallyladenosine(37) in tRNA + diphosphate. Catalyzes the transfer of a dimethylallyl group onto the adenine at position 37 in tRNAs that read codons beginning with uridine, leading to the formation of N6-(dimethylallyl)adenosine (i(6)A). This chain is tRNA dimethylallyltransferase, found in Oceanobacillus iheyensis (strain DSM 14371 / CIP 107618 / JCM 11309 / KCTC 3954 / HTE831).